The chain runs to 272 residues: Diaminopimelate epimerase (272 aa).

Substrate is bound by residues Asn-11 and Asn-63. Residue Cys-72 is the Proton donor of the active site. Substrate is bound by residues Gly-73–Asn-74, Asn-190, and Glu-208–Arg-209. The Proton acceptor role is filled by Cys-217. Gly-218 to Thr-219 lines the substrate pocket.

It belongs to the diaminopimelate epimerase family. In terms of assembly, homodimer.

It localises to the cytoplasm. It carries out the reaction (2S,6S)-2,6-diaminopimelate = meso-2,6-diaminopimelate. It participates in amino-acid biosynthesis; L-lysine biosynthesis via DAP pathway; DL-2,6-diaminopimelate from LL-2,6-diaminopimelate: step 1/1. Its function is as follows. Catalyzes the stereoinversion of LL-2,6-diaminopimelate (L,L-DAP) to meso-diaminopimelate (meso-DAP), a precursor of L-lysine and an essential component of the bacterial peptidoglycan. This chain is Diaminopimelate epimerase, found in Clostridium perfringens (strain 13 / Type A).